The sequence spans 338 residues: MSRIAVMGSGAWGTAIALHLARQSEHELLLWSHSARVAESIRAFGENRDFLPGYPVPPALAVTVTADAEAALEFAEIIISVMPSHHVRHSYEQIFAPYLTPSHRILSATKGLEDATYLRMSQVISDVLLRRGLDLPLAVLGGPSFAQEVAAGSPTAVTVASKDAAFAGELQQVFSNGTLRLYTNDDVCGVEMGGALKNIIAIASGVVTGLGLGHNSTAAIITRGIAEMTRLAVACGGRRETLAGLAGLGDLVLTCTGSLSRNRTVGVELGKGRGLDDILAGLGGKVAEGVRTTAAALGLAASLGVEMPIAQQVHTVLQGQASPLQAMQYLMSRPGRDE.

NADPH contacts are provided by W12, H33, and K110. Sn-glycerol 3-phosphate is bound by residues K110, G142, and S144. A146 provides a ligand contact to NADPH. Sn-glycerol 3-phosphate-binding residues include K197, D250, S260, R261, and N262. Residue K197 is the Proton acceptor of the active site. R261 contributes to the NADPH binding site. The NADPH site is built by V286 and E288.

This sequence belongs to the NAD-dependent glycerol-3-phosphate dehydrogenase family.

The protein localises to the cytoplasm. The enzyme catalyses sn-glycerol 3-phosphate + NAD(+) = dihydroxyacetone phosphate + NADH + H(+). It carries out the reaction sn-glycerol 3-phosphate + NADP(+) = dihydroxyacetone phosphate + NADPH + H(+). Its pathway is membrane lipid metabolism; glycerophospholipid metabolism. Functionally, catalyzes the reduction of the glycolytic intermediate dihydroxyacetone phosphate (DHAP) to sn-glycerol 3-phosphate (G3P), the key precursor for phospholipid synthesis. The chain is Glycerol-3-phosphate dehydrogenase [NAD(P)+] from Acidobacterium capsulatum (strain ATCC 51196 / DSM 11244 / BCRC 80197 / JCM 7670 / NBRC 15755 / NCIMB 13165 / 161).